The following is a 92-amino-acid chain: Large ribosomal subunit protein eL31 (92 aa).

Belongs to the eukaryotic ribosomal protein eL31 family.

This chain is Large ribosomal subunit protein eL31, found in Pyrobaculum arsenaticum (strain DSM 13514 / JCM 11321 / PZ6).